The following is a 447-amino-acid chain: Phosphoglucosamine mutase (447 aa).

Serine 104 functions as the Phosphoserine intermediate in the catalytic mechanism. Residues serine 104, aspartate 243, aspartate 245, and aspartate 247 each contribute to the Mg(2+) site. Serine 104 carries the post-translational modification Phosphoserine.

It belongs to the phosphohexose mutase family. Mg(2+) is required as a cofactor. Activated by phosphorylation.

The enzyme catalyses alpha-D-glucosamine 1-phosphate = D-glucosamine 6-phosphate. Its function is as follows. Catalyzes the conversion of glucosamine-6-phosphate to glucosamine-1-phosphate. This chain is Phosphoglucosamine mutase, found in Corynebacterium efficiens (strain DSM 44549 / YS-314 / AJ 12310 / JCM 11189 / NBRC 100395).